The chain runs to 574 residues: Alpha-mannosidase I MNS5 (574 aa).

The Cytoplasmic segment spans residues 1 to 9 (MSCPIHPRR). Residues 10–26 (LFLCLLISLTFFVVDPS) form a helical; Signal-anchor for type II membrane protein membrane-spanning segment. Over 27–574 (SQHIEVKKKQ…VGYCGLWNPL (548 aa)) the chain is Lumenal. N-linked (GlcNAc...) asparagine glycosylation is found at Asn89, Asn107, and Asn121. The active-site Proton donor is the Glu134. Asn201 carries N-linked (GlcNAc...) asparagine glycosylation. Asp274 is a catalytic residue. Asn349 carries an N-linked (GlcNAc...) asparagine glycan. The Proton donor role is filled by Glu367. Glu388 is a catalytic residue. Ca(2+) is bound at residue Thr471. N-linked (GlcNAc...) asparagine glycosylation is present at Asn494.

Belongs to the glycosyl hydrolase 47 family. Ca(2+) serves as cofactor.

Its subcellular location is the endoplasmic reticulum membrane. Its pathway is protein modification; protein glycosylation. Can convert Man(9)GlcNAc(2) and Man(8)GlcNAc(2) into N-glycans with a terminal alpha-1,6-linked Man residue in the C-branch. Functions in the formation of unique N-glycan structures that are specifically recognized by components of the endoplasmic reticulum-associated degradation (ERAD) machinery, which leads to the degradation of misfolded glycoproteins. Most likely generates N-glycan signal on misfolded glycoproteins that is subsequently recognized by OS9. Required for ERAD of the heavily glycosylated and misfolded BRI1 variants BRI1-5 and BRI1-9. Does not seem to play role in N-glycan processing of correctly folded proteins destined for secretion. In Arabidopsis thaliana (Mouse-ear cress), this protein is Alpha-mannosidase I MNS5 (MNS5).